Consider the following 431-residue polypeptide: Putative helicase 055L (431 aa).

Residues 73-222 enclose the Helicase ATP-binding domain; the sequence is WGHVTSKGYC…ALGAFFGRED (150 aa). 86–93 is a binding site for ATP; that stretch reads CPPGFGKT. The DEAH box signature appears at 175 to 178; the sequence is DEAH. Residues 403–431 are disordered; that stretch reads KCDASRPSQSTPTPTGSSQPAPRTRRPQR. Low complexity predominate over residues 407–424; it reads SRPSQSTPTPTGSSQPAP.

This is Putative helicase 055L from Frog virus 3 (isolate Goorha) (FV-3).